A 1960-amino-acid chain; its full sequence is Myosin-9 (1960 aa).

At Ala2 the chain carries N-acetylalanine. A mediates interaction with LIMCH1 region spans residues 2–838; it reads AQQAADKYLY…RLFTKVKPLL (837 aa). Position 8 is an N6-acetyllysine (Lys8). At Tyr11 the chain carries Phosphotyrosine. Residues 27 to 77 form the Myosin N-terminal SH3-like domain; the sequence is AAKKLVWVPSDKSGFEPASLKEEVGEEAIVELVENGKKVKVNKDDIQKMNP. The Myosin motor domain maps to 81 to 776; sequence SKVEDMAELT…VLAHLEEERD (696 aa). N6-acetyllysine is present on Lys102. 174–181 contacts ATP; it reads GESGAGKT. N6-acetyllysine is present on residues Lys299, Lys435, and Lys613. Phosphoserine is present on Ser628. The actin-binding stretch occupies residues 654–676; that stretch reads LAKLMATLRNTNPNFVRCIIPNH. Tyr754 is modified (phosphotyrosine). One can recognise an IQ domain in the interval 779-808; it reads ITDVIIGFQACCRGYLARKAFAKRQQQLTA. Residues 837–1926 adopt a coiled-coil conformation; sequence LLQVSRQEEE…LKNKLRRGDL (1090 aa). Lys850 is subject to N6-succinyllysine. An N6-acetyllysine mark is found at Lys860, Lys975, and Lys1024. Ser1114 is subject to Phosphoserine. Residues 1117–1137 are disordered; the sequence is QEDLESERASRNKAEKQKRDL. Residues 1122–1137 show a composition bias toward basic and acidic residues; the sequence is SERASRNKAEKQKRDL. An N6-acetyllysine mark is found at Lys1234, Lys1249, Lys1357, Lys1392, Lys1404, Lys1410, Lys1459, and Lys1638. Position 1669 is an N6-succinyllysine (Lys1669). Ser1714 is modified (phosphoserine). N6-acetyllysine occurs at positions 1793, 1802, and 1845. A disordered region spans residues 1877–1918; it reads RQLEEAEEEAQRANASRRKLQRELEDATETADAMNREVSSLK. Arg1923 carries the post-translational modification Omega-N-methylarginine. Positions 1934–1960 are disordered; the sequence is VARKGAGDCSDEEVDGKADGAEAKAAE. Ser1943 is modified (phosphoserine). The span at 1948-1960 shows a compositional bias: basic and acidic residues; it reads DGKADGAEAKAAE.

It belongs to the TRAFAC class myosin-kinesin ATPase superfamily. Myosin family. Myosin is a hexameric protein that consists of 2 heavy chain subunits (MHC), 2 alkali light chain subunits (MLC) and 2 regulatory light chain subunits (MLC-2). Interacts with RASIP1. Interacts with DDR1. Interacts with PDLIM2. Interacts with SVIL. Interacts with HTRA3. Interacts with Myo7a. Interacts with CFAP95. Interacts with LIMCH1; independently of the integration of MYH9 into the myosin complex. Interacts with RAB3A. Interacts with ZBED4. Interacts with S100A4; this interaction increases cell motility. ISGylated. Post-translationally, ubiquitination.

The protein resides in the cytoplasm. Its subcellular location is the cytoskeleton. It is found in the cell cortex. It localises to the cytoplasmic vesicle. The protein localises to the secretory vesicle. The protein resides in the cortical granule. In terms of biological role, cellular myosin that appears to play a role in cytokinesis, cell shape, and specialized functions such as secretion and capping. Required for cortical actin clearance prior to oocyte exocytosis. Promotes cell motility in conjunction with S100A4. During cell spreading, plays an important role in cytoskeleton reorganization, focal contact formation (in the margins but not the central part of spreading cells), and lamellipodial retraction; this function is mechanically antagonized by MYH10. The polypeptide is Myosin-9 (MYH9) (Canis lupus familiaris (Dog)).